A 256-amino-acid chain; its full sequence is Pimeloyl-[acyl-carrier protein] methyl ester esterase (256 aa).

In terms of domain architecture, AB hydrolase-1 spans 15–242; sequence HLVLLHGWGL…AAHAPFISHP (228 aa). Residues tryptophan 22, 82–83, and 143–147 contribute to the substrate site; these read SL and FLALQ. Catalysis depends on serine 82, which acts as the Nucleophile. Catalysis depends on residues aspartate 207 and histidine 235. Residue histidine 235 participates in substrate binding.

The protein belongs to the AB hydrolase superfamily. Carboxylesterase BioH family. In terms of assembly, monomer.

The protein resides in the cytoplasm. The catalysed reaction is 6-carboxyhexanoyl-[ACP] methyl ester + H2O = 6-carboxyhexanoyl-[ACP] + methanol + H(+). It functions in the pathway cofactor biosynthesis; biotin biosynthesis. Functionally, the physiological role of BioH is to remove the methyl group introduced by BioC when the pimeloyl moiety is complete. It allows to synthesize pimeloyl-ACP via the fatty acid synthetic pathway through the hydrolysis of the ester bonds of pimeloyl-ACP esters. This chain is Pimeloyl-[acyl-carrier protein] methyl ester esterase, found in Escherichia coli O127:H6 (strain E2348/69 / EPEC).